The chain runs to 695 residues: Nucleoprotein (695 aa).

Coiled coils occupy residues V316–E341 and Q372–Q399. Disordered regions lie at residues Q424–D458 and T483–A615. The segment covering V438 to T447 has biased composition (basic and acidic residues). 2 stretches are compositionally biased toward polar residues: residues P494–G505 and T537–E552. The PTAP/PSAP motif motif lies at P603–P606.

It belongs to the filoviruses nucleoprotein family. As to quaternary structure, homooligomer. Homomultimerizes to form the nucleocapsid. Binds to viral genomic RNA. Interacts with VP35 and VP30 to form the nucleocapsid. Also interacts with VP24 and VP40. Phosphorylated.

The protein resides in the virion. It localises to the host cytoplasm. Functionally, encapsidates the genome, protecting it from nucleases. The encapsidated genomic RNA is termed the nucleocapsid and serves as template for transcription and replication. During replication, encapsidation by NP is coupled to RNA synthesis and all replicative products are resistant to nucleases. The protein is Nucleoprotein (NP) of Lake Victoria marburgvirus (strain Ozolin-75) (MARV).